Here is a 335-residue protein sequence, read N- to C-terminus: UPF0353 protein MAP_3435c (335 aa).

The next 2 membrane-spanning stretches (helical) occupy residues Trp18 to Phe38 and Val67 to Thr87. A VWFA domain is found at Val98–Leu294. Residues Met309 to Leu329 traverse the membrane as a helical segment.

This sequence belongs to the UPF0353 family.

The protein localises to the cell membrane. This Mycolicibacterium paratuberculosis (strain ATCC BAA-968 / K-10) (Mycobacterium paratuberculosis) protein is UPF0353 protein MAP_3435c.